The primary structure comprises 632 residues: Probable potassium transport system protein Kup 2 (632 aa).

The next 12 helical transmembrane spans lie at 19-39 (FWGL…TSPL), 58-78 (MIVL…VTAK), 110-130 (MFLM…SMIT), 147-167 (PALE…LFAV), 178-198 (AFGP…IVHI), 216-236 (FLLS…LAVT), 257-277 (WLFF…ALVL), 290-310 (MVPE…TVIA), 347-367 (IYLP…VLLF), 377-397 (YGIA…VVIW), 404-424 (AAVA…FFSA), and 429-449 (LFEG…TIWT).

It belongs to the HAK/KUP transporter (TC 2.A.72) family.

It is found in the cell inner membrane. The enzyme catalyses K(+)(in) + H(+)(in) = K(+)(out) + H(+)(out). Transport of potassium into the cell. Likely operates as a K(+):H(+) symporter. This Bradyrhizobium sp. (strain BTAi1 / ATCC BAA-1182) protein is Probable potassium transport system protein Kup 2.